The primary structure comprises 449 residues: Tubulin alpha chain (449 aa).

The short motif at 1–4 (MREC) is the MREC motif element. Q11 contacts GTP. An N6-acetyllysine modification is found at K40. Residues E71, S140, G144, T145, T179, N206, and N228 each contribute to the GTP site. E71 contributes to the Mg(2+) binding site. The active site involves E254. A 5-glutamyl polyglutamate modification is found at E443.

Belongs to the tubulin family. In terms of assembly, dimer of alpha and beta chains. A typical microtubule is a hollow water-filled tube with an outer diameter of 25 nm and an inner diameter of 15 nM. Alpha-beta heterodimers associate head-to-tail to form protofilaments running lengthwise along the microtubule wall with the beta-tubulin subunit facing the microtubule plus end conferring a structural polarity. Microtubules usually have 13 protofilaments but different protofilament numbers can be found in some organisms and specialized cells. Mg(2+) is required as a cofactor. Some glutamate residues at the C-terminus are polyglycylated, resulting in polyglycine chains on the gamma-carboxyl group. Glycylation is mainly limited to tubulin incorporated into axonemes (cilia and flagella) whereas glutamylation is prevalent in neuronal cells, centrioles, axonemes, and the mitotic spindle. Both modifications can coexist on the same protein on adjacent residues, and lowering polyglycylation levels increases polyglutamylation, and reciprocally. The precise function of polyglycylation is still unclear. Post-translationally, some glutamate residues at the C-terminus are polyglutamylated, resulting in polyglutamate chains on the gamma-carboxyl group. Polyglutamylation plays a key role in microtubule severing by spastin (SPAST). SPAST preferentially recognizes and acts on microtubules decorated with short polyglutamate tails: severing activity by SPAST increases as the number of glutamates per tubulin rises from one to eight, but decreases beyond this glutamylation threshold. In terms of processing, acetylation of alpha chains at Lys-40 is located inside the microtubule lumen. This modification has been correlated with increased microtubule stability, intracellular transport and ciliary assembly. Undergoes a tyrosination/detyrosination cycle, the cyclic removal and re-addition of a C-terminal tyrosine residue by the enzymes tubulin tyrosine carboxypeptidase (MATCAP1, VASH1 or VASH2) and tubulin tyrosine ligase (TTL), respectively. Post-translationally, tyrosination promotes microtubule interaction with CAP-Gly microtubule plus-end tracking proteins. Tyrosinated tubulins regulate the initiation of dynein-driven motility. In terms of processing, detyrosination is involved in metaphase plate congression by guiding chromosomes during mitosis. Detyrosination increases microtubules-dependent mechanotransduction in dystrophic cardiac and skeletal muscle. In cardiomyocytes, detyrosinated microtubules are required to resist to contractile compression during contraction.

Its subcellular location is the cytoplasm. It localises to the cytoskeleton. The enzyme catalyses GTP + H2O = GDP + phosphate + H(+). In terms of biological role, tubulin is the major constituent of microtubules, a cylinder consisting of laterally associated linear protofilaments composed of alpha- and beta-tubulin heterodimers. Microtubules grow by the addition of GTP-tubulin dimers to the microtubule end, where a stabilizing cap forms. Below the cap, tubulin dimers are in GDP-bound state, owing to GTPase activity of alpha-tubulin. This Xenopus tropicalis (Western clawed frog) protein is Tubulin alpha chain (tuba).